A 347-amino-acid polypeptide reads, in one-letter code: MILISDATLRDGNHAIRHQLSAAQIHAYARAADEAGIDIVEVGHGNGLGGSSCLLGQTPIGDRLMLETARAALRTSRLGVHFIPGLGKAADIALALEIGVDVVRVATHCTEANVSARFIEQTRVAGRTAFGVLMMSHMAPSDVLLAQAKLMERYGAQAVVLMDSAGYSTPSLVRAKVERLVDGLDIDVGFHAHNNLGLAVANSLVALEAGARIVDACVKGFGAGAGNTQLETLVAAMEREGHDTRTTFEHVMALARGTEAFLNPKTPHIQPANIASGLYGLFSGYVPHIQKAAQEFGVNEFELYKRLAERKLVAGQEDIIIEEASRLARERDVQRATDGVRISELSA.

Positions 2–252 (ILISDATLRD…DTRTTFEHVM (251 aa)) constitute a Pyruvate carboxyltransferase domain. 10-11 (RD) provides a ligand contact to substrate. Aspartate 11 lines the Mn(2+) pocket. Catalysis depends on histidine 14, which acts as the Proton acceptor. Residues serine 164 and histidine 191 each contribute to the substrate site. Mn(2+) contacts are provided by histidine 191 and histidine 193.

It belongs to the 4-hydroxy-2-oxovalerate aldolase family.

The enzyme catalyses (S)-4-hydroxy-2-oxopentanoate = acetaldehyde + pyruvate. The sequence is that of 4-hydroxy-2-oxovalerate aldolase (mhpE) from Burkholderia thailandensis (strain ATCC 700388 / DSM 13276 / CCUG 48851 / CIP 106301 / E264).